A 221-amino-acid chain; its full sequence is Glutathione S-transferase U25 (221 aa).

The residue at position 2 (alanine 2) is an N-acetylalanine. The 80-residue stretch at 3–82 (DEVILLDFWP…YIDEVWPSKT (80 aa)) folds into the GST N-terminal domain. Residues 13–14 (SM), 39–40 (NK), 53–54 (KI), and 66–67 (ES) each bind glutathione. Residues 88–208 (DPYQRAQAKF…LPDSEKIIKF (121 aa)) form the GST C-terminal domain. Threonine 149 is subject to Phosphothreonine.

This sequence belongs to the GST superfamily. Tau family.

The protein localises to the cytoplasm. The protein resides in the cytosol. It carries out the reaction RX + glutathione = an S-substituted glutathione + a halide anion + H(+). In terms of biological role, may be involved in the conjugation of reduced glutathione to a wide number of exogenous and endogenous hydrophobic electrophiles and have a detoxification role against certain herbicides. The chain is Glutathione S-transferase U25 (GSTU25) from Arabidopsis thaliana (Mouse-ear cress).